The following is an 86-amino-acid chain: MANTKSAIKRIRRIATQTLVNKARKSKYRNAIKKMNLLLVEKKKDEALKFLPKLNSELMKVAKTGIIKKANASRNISRITKKISAL.

It belongs to the bacterial ribosomal protein bS20 family.

Its function is as follows. Binds directly to 16S ribosomal RNA. The sequence is that of Small ribosomal subunit protein bS20 from Pelagibacter ubique (strain HTCC1062).